The sequence spans 226 residues: ATP synthase F(0) complex subunit a (226 aa).

6 helical membrane-spanning segments follow: residues 11 to 31, 68 to 88, 97 to 117, 138 to 158, 164 to 184, and 194 to 214; these read APTI…TLLI, WSLM…LGLL, QLSM…ITGL, IPML…ALAV, ITAG…LSTI, and VLLM…AYVF.

This sequence belongs to the ATPase A chain family. Component of the ATP synthase complex composed at least of ATP5F1A/subunit alpha, ATP5F1B/subunit beta, ATP5MC1/subunit c (homooctomer), MT-ATP6/subunit a, MT-ATP8/subunit 8, ATP5ME/subunit e, ATP5MF/subunit f, ATP5MG/subunit g, ATP5MK/subunit k, ATP5MJ/subunit j, ATP5F1C/subunit gamma, ATP5F1D/subunit delta, ATP5F1E/subunit epsilon, ATP5PF/subunit F6, ATP5PB/subunit b, ATP5PD/subunit d, ATP5PO/subunit OSCP. ATP synthase complex consists of a soluble F(1) head domain (subunits alpha(3) and beta(3)) - the catalytic core - and a membrane F(0) domain - the membrane proton channel (subunits c, a, 8, e, f, g, k and j). These two domains are linked by a central stalk (subunits gamma, delta, and epsilon) rotating inside the F1 region and a stationary peripheral stalk (subunits F6, b, d, and OSCP). Interacts with DNAJC30; interaction is direct.

It localises to the mitochondrion inner membrane. It carries out the reaction H(+)(in) = H(+)(out). Its function is as follows. Subunit a, of the mitochondrial membrane ATP synthase complex (F(1)F(0) ATP synthase or Complex V) that produces ATP from ADP in the presence of a proton gradient across the membrane which is generated by electron transport complexes of the respiratory chain. ATP synthase complex consist of a soluble F(1) head domain - the catalytic core - and a membrane F(1) domain - the membrane proton channel. These two domains are linked by a central stalk rotating inside the F(1) region and a stationary peripheral stalk. During catalysis, ATP synthesis in the catalytic domain of F(1) is coupled via a rotary mechanism of the central stalk subunits to proton translocation. With the subunit c (ATP5MC1), forms the proton-conducting channel in the F(0) domain, that contains two crucial half-channels (inlet and outlet) that facilitate proton movement from the mitochondrial intermembrane space (IMS) into the matrix. Protons are taken up via the inlet half-channel and released through the outlet half-channel, following a Grotthuss mechanism. This is ATP synthase F(0) complex subunit a from Papio hamadryas (Hamadryas baboon).